The chain runs to 314 residues: Olfactory receptor 14A2 (314 aa).

Residues 1-26 lie on the Extracellular side of the membrane; the sequence is MANVTLVTGFLLMGFSNIQKLRILYG. N-linked (GlcNAc...) asparagine glycosylation is present at N3. The helical transmembrane segment at 27–47 threads the bilayer; it reads VLFLLIYLAALMSNLLIITLI. Residues 48 to 55 lie on the Cytoplasmic side of the membrane; it reads TLDVKLQT. The helical transmembrane segment at 56 to 76 threads the bilayer; the sequence is PMYFFLKNLSFLDVFLVSVPI. The Extracellular segment spans residues 77 to 91; the sequence is PKFIVNNLTHNNSIS. The N-linked (GlcNAc...) asparagine glycan is linked to N83. A helical transmembrane segment spans residues 92-112; sequence ILGCAFQLLLMTSFSAGEIFI. The cysteines at positions 95 and 177 are disulfide-linked. The Cytoplasmic portion of the chain corresponds to 113-136; sequence LTAMSYDRYVAICCPLNYEVIMNT. The chain crosses the membrane as a helical span at residues 137–157; it reads GVCVLMASVSWAIGGLFGTAY. Over 158-193 the chain is Extracellular; the sequence is TAGTFSMPFCGSSVIPQFFCDVPSLLRISCSETLMV. A helical transmembrane segment spans residues 194–214; the sequence is IYAGIGVGACLSISCFICIVI. At 215–237 the chain is on the cytoplasmic side; that stretch reads SYIYIFSTVLKIPTTKGQSKAFS. A helical membrane pass occupies residues 238-258; sequence TCFPHLTVFTVFIITAYFVYL. At 259-267 the chain is on the extracellular side; that stretch reads KPPSNSPSV. Residues 268–290 traverse the membrane as a helical segment; the sequence is IDRLLSVIYTVMPPVFNPVTYSL. Over 291 to 314 the chain is Cytoplasmic; the sequence is RNNDMKCALIRLLQKTYGQEAYFI.

It belongs to the G-protein coupled receptor 1 family.

It localises to the cell membrane. Functionally, odorant receptor. This chain is Olfactory receptor 14A2 (OR14A2), found in Homo sapiens (Human).